Here is a 226-residue protein sequence, read N- to C-terminus: CRISPR-associated endonuclease Cas3-HD (226 aa).

The 196-residue stretch at 9–204 (GRDCLQTYED…HVLTVCDNWG (196 aa)) folds into the HD Cas3-type domain. The Mg(2+) site is built by Asp-56, His-74, His-101, and His-102.

Belongs to the CRISPR-associated nuclease Cas3-HD family. As to quaternary structure, monomer. Can form a Cascade complex with Csa5, Cas7, Cas5a, Cas3 and Cas8a2. The cofactor is Mg(2+).

In terms of biological role, CRISPR (clustered regularly interspaced short palindromic repeat), is an adaptive immune system that provides protection against mobile genetic elements (viruses, transposable elements and conjugative plasmids). CRISPR clusters contain sequences complementary to antecedent mobile elements and target invading nucleic acids. CRISPR clusters are transcribed and processed into CRISPR RNA (crRNA). Cas3 plus Cascade participate in CRISPR interference, the third stage of CRISPR immunity. Acts as a ssDNA and ssRNA nuclease, probably with both exo- and endonuclease activities. Activity is higher for DNA than RNA. The protein is CRISPR-associated endonuclease Cas3-HD (cas3') of Thermoproteus tenax (strain ATCC 35583 / DSM 2078 / JCM 9277 / NBRC 100435 / Kra 1).